Consider the following 737-residue polypeptide: tRNA-dihydrouridine(47) synthase [NAD(P)(+)] (737 aa).

2 stretches are compositionally biased toward basic and acidic residues: residues 1–11 and 24–33; these read MESQETAKRPI and PATKRVKLDD. A disordered region spans residues 1 to 127; it reads MESQETAKRP…GKKKRPKGQN (127 aa). Residues 35–44 show a composition bias toward low complexity; sequence PVPQIQEEPS. Positions 57-82 are enriched in basic and acidic residues; sequence EDEKPTEQRQDDRDKRRGIAPIKKEY. 2 C3H1-type zinc fingers span residues 142 to 166 and 187 to 208; these read CNSV…NALH and CPVW…VESH. Residues 332–334 and glutamine 407 each bind FMN; that span reads PLT. Catalysis depends on cysteine 439, which acts as the Proton donor. Residues lysine 479, histidine 520, 577 to 579, and 601 to 602 each bind FMN; these read NGD and GR.

It belongs to the Dus family. Dus3 subfamily. Requires FMN as cofactor.

It localises to the cytoplasm. Its subcellular location is the nucleus. The catalysed reaction is 5,6-dihydrouridine(47) in tRNA + NAD(+) = uridine(47) in tRNA + NADH + H(+). The enzyme catalyses 5,6-dihydrouridine(47) in tRNA + NADP(+) = uridine(47) in tRNA + NADPH + H(+). It carries out the reaction a 5,6-dihydrouridine in mRNA + NAD(+) = a uridine in mRNA + NADH + H(+). It catalyses the reaction a 5,6-dihydrouridine in mRNA + NADP(+) = a uridine in mRNA + NADPH + H(+). Its function is as follows. Catalyzes the synthesis of dihydrouridine, a modified base found in the D-loop of most tRNAs. Specifically modifies U47 in cytoplasmic tRNAs. Catalyzes the synthesis of dihydrouridine in some mRNAs, thereby affecting their translation. The sequence is that of tRNA-dihydrouridine(47) synthase [NAD(P)(+)] (dus-3) from Neurospora crassa (strain ATCC 24698 / 74-OR23-1A / CBS 708.71 / DSM 1257 / FGSC 987).